Consider the following 210-residue polypeptide: RNA chaperone ProQ (210 aa).

Composition is skewed to basic and acidic residues over residues Leu-103–Lys-124 and Arg-132–Lys-144. The interval Leu-103–Lys-148 is disordered.

Belongs to the ProQ family.

The protein localises to the cytoplasm. RNA chaperone with significant RNA binding, RNA strand exchange and RNA duplexing activities. This chain is RNA chaperone ProQ, found in Aeromonas salmonicida (strain A449).